The chain runs to 388 residues: Single-stranded DNA-binding protein 3 (388 aa).

Position 1 is an N-acetylmethionine (methionine 1). Residues 16–48 (AREKLALYVYEYLLHVGAQKSAQTFLSEIRWEK) enclose the LisH domain. The tract at residues 101-388 (VLGNIPPNDG…NYSPSMTMSV (288 aa)) is disordered. The segment covering 126-139 (GSQPSPHAQPPPHN) has biased composition (pro residues). 3 positions are modified to asymmetric dimethylarginine: arginine 155, arginine 161, and arginine 165. Low complexity-rich tracts occupy residues 200 to 209 (MQRMNPPRGM) and 250 to 268 (PNSA…TYVG). The span at 272–282 (GGGPPGTPIMP) shows a compositional bias: pro residues. Over residues 285–296 (ADSTNSSDNIYT) the composition is skewed to polar residues. Gly residues predominate over residues 315–325 (GSDGPMGGMGG). Residues 346 to 357 (NSPNNISGISNP) are compositionally biased toward low complexity. Phosphoserine occurs at positions 347, 352, and 355. Threonine 360 is modified (phosphothreonine). A compositionally biased stretch (polar residues) spans 373–388 (HSFQNDNYSPSMTMSV). Phosphoserine is present on residues serine 381 and serine 387.

Highly expressed in all hematopoietic tissues, including spleen, lymph node, peripheral blood, bone marrow, thymus, and fetal liver, with highest expression in thymus and fetal liver. Expression is also high in heart, brain, kidney, and skeletal muscle.

It is found in the nucleus. Functionally, may be involved in transcription regulation of the alpha 2(I) collagen gene where it binds to the single-stranded polypyrimidine sequences in the promoter region. In Homo sapiens (Human), this protein is Single-stranded DNA-binding protein 3 (SSBP3).